We begin with the raw amino-acid sequence, 161 residues long: Eukaryotic translation initiation factor 5A-1 (161 aa).

Over residues 1–12 (MSDEEHQFESKA) the composition is skewed to basic and acidic residues. The tract at residues 1 to 21 (MSDEEHQFESKADAGASKTYP) is disordered. Lys52 carries the hypusine modification.

This sequence belongs to the eIF-5A family. In terms of processing, lys-52 undergoes hypusination, a unique post-translational modification that consists in the addition of a butylamino group from spermidine to lysine side chain, leading to the formation of the unusual amino acid hypusine. eIF-5As are the only known proteins to undergo this modification, which is essential for their function.

Its function is as follows. Translation factor that promotes translation elongation and termination, particularly upon ribosome stalling at specific amino acid sequence contexts. Binds between the exit (E) and peptidyl (P) site of the ribosome and promotes rescue of stalled ribosome: specifically required for efficient translation of polyproline-containing peptides as well as other motifs that stall the ribosome. Acts as a ribosome quality control (RQC) cofactor by joining the RQC complex to facilitate peptidyl transfer during CAT tailing step. This is Eukaryotic translation initiation factor 5A-1 from Medicago sativa (Alfalfa).